A 166-amino-acid polypeptide reads, in one-letter code: Cytochrome c-type biogenesis protein CcmE (166 aa).

The Cytoplasmic segment spans residues 1–8 (MNAVRRKK). The chain crosses the membrane as a helical; Signal-anchor for type II membrane protein span at residues 9 to 29 (LMWVMFTLAGAVIAVALVIYA). The Periplasmic portion of the chain corresponds to 30–166 (IGKQTDYYFD…KLHETKTLQQ (137 aa)). Residues histidine 124 and tyrosine 128 each coordinate heme. The tract at residues 133-166 (VAKSMKENNRSGAVPSSEQYNPAEKLHETKTLQQ) is disordered. Over residues 142–152 (RSGAVPSSEQY) the composition is skewed to polar residues. Residues 156–166 (EKLHETKTLQQ) are compositionally biased toward basic and acidic residues.

Belongs to the CcmE/CycJ family.

It localises to the cell inner membrane. In terms of biological role, heme chaperone required for the biogenesis of c-type cytochromes. Transiently binds heme delivered by CcmC and transfers the heme to apo-cytochromes in a process facilitated by CcmF and CcmH. This chain is Cytochrome c-type biogenesis protein CcmE, found in Psychrobacter arcticus (strain DSM 17307 / VKM B-2377 / 273-4).